The primary structure comprises 1150 residues: ATP-dependent DNA helicase Q-like 4B (1150 aa).

Disordered regions lie at residues threonine 124–phenylalanine 143 and cysteine 154–serine 179. Residues threonine 132 to threonine 142 are compositionally biased toward low complexity. Positions aspartate 327–leucine 361 form a coiled coil. The segment covering tyrosine 416 to serine 428 has biased composition (basic and acidic residues). A disordered region spans residues tyrosine 416–tryptophan 446. Residues isoleucine 478–valine 653 enclose the Helicase ATP-binding domain. Methionine 491–serine 498 serves as a coordination point for ATP. The DEAH box signature appears at aspartate 597 to histidine 600. The Helicase C-terminal domain maps to aspartate 678–alanine 823. The 83-residue stretch at serine 1029–threonine 1111 folds into the HRDC domain. The disordered stretch occupies residues asparagine 1106 to lysine 1150. Basic residues predominate over residues serine 1141–lysine 1150.

This sequence belongs to the helicase family. RecQ subfamily. The cofactor is Mg(2+). It depends on Mn(2+) as a cofactor. As to expression, mostly expressed in roots, seedlings, shoots, shoot apical mersitem, flowers, and siliques.

The protein localises to the nucleus. It catalyses the reaction Couples ATP hydrolysis with the unwinding of duplex DNA by translocating in the 3'-5' direction.. It carries out the reaction ATP + H2O = ADP + phosphate + H(+). In terms of biological role, 3'-5' DNA helicase that may play a role in the repair of DNA. Required to promote but not to suppress crossovers. This chain is ATP-dependent DNA helicase Q-like 4B (RECQL4B), found in Arabidopsis thaliana (Mouse-ear cress).